The primary structure comprises 429 residues: Putative F-box/kelch-repeat protein At2g21680 (429 aa).

Positions 1–32 are disordered; the sequence is MVLISETSDDGSTGGDHQIKKPKKEEDRNKKL. Residues 17-29 show a composition bias toward basic and acidic residues; sequence HQIKKPKKEEDRN. The F-box domain occupies 37-84; that stretch reads QVSLPIPEELILRCFLLVRRCHHPSLSLVCRSFHSLMSKLYDDRLRLG. 5 Kelch repeats span residues 144–175, 176–221, 222–267, 269–313, and 315–359; these read DIYV…RRGE, TSIR…VIDG, KIYV…LTYA, MKEK…VVDN, and LFCI…DGYK.

This is Putative F-box/kelch-repeat protein At2g21680 from Arabidopsis thaliana (Mouse-ear cress).